Here is a 317-residue protein sequence, read N- to C-terminus: Putative cuticle collagen 80 (317 aa).

The disordered stretch occupies residues 80 to 262; the sequence is CNCGPQASNC…GAPGNDGAPG (183 aa). Triple-helical region stretches follow at residues 92–124, 137–199, and 202–264; these read GPPG…AGPA, GAPG…SGQR, and GLPG…PGSD. Low complexity-rich tracts occupy residues 108 to 124, 135 to 145, and 175 to 206; these read QPGP…AGPA, PQGAPGPAGAP, and AGDA…LPGP. Composition is skewed to pro residues over residues 207-219 and 230-240; these read SGRP…PGAP and PAGPPGPPGPN. Residues 242–262 show a composition bias toward low complexity; sequence QPGHPGQDGQPGAPGNDGAPG.

It belongs to the cuticular collagen family. In terms of assembly, collagen polypeptide chains are complexed within the cuticle by disulfide bonds and other types of covalent cross-links.

Its function is as follows. Nematode cuticles are composed largely of collagen-like proteins. The cuticle functions both as an exoskeleton and as a barrier to protect the worm from its environment. The polypeptide is Putative cuticle collagen 80 (col-80) (Caenorhabditis elegans).